The chain runs to 141 residues: Large ribosomal subunit protein uL11 (141 aa).

It belongs to the universal ribosomal protein uL11 family. As to quaternary structure, part of the ribosomal stalk of the 50S ribosomal subunit. Interacts with L10 and the large rRNA to form the base of the stalk. L10 forms an elongated spine to which L12 dimers bind in a sequential fashion forming a multimeric L10(L12)X complex. Post-translationally, one or more lysine residues are methylated.

Forms part of the ribosomal stalk which helps the ribosome interact with GTP-bound translation factors. This chain is Large ribosomal subunit protein uL11, found in Geobacillus thermodenitrificans (strain NG80-2).